Reading from the N-terminus, the 250-residue chain is MSDDDYMNSDDDNDAEKRYVRPIFVRKRRREEDYVATSKDNIHHHPCDWSAKPSQRQNENEQKSTIRLVPVAMNTPKCQEKKKKRKGVGTTSHEATLFEYGESIAGYKCVTTESERDRLKRSHESESSSESEVDVFAFDQAKGISSKVEAEERYARAVRQYWRMTKDEPATLPLPGTPTLAAVSLDMIDDKSVEQFYTMSSALMDANRLDLIRRDRIRWHPDKHRYHKSKVTKLFQAINGLWEQEKTEKR.

K17 participates in a covalent cross-link: Glycyl lysine isopeptide (Lys-Gly) (interchain with G-Cter in ubiquitin). Residues 30–67 (REEDYVATSKDNIHHHPCDWSAKPSQRQNENEQKSTIR) are disordered.

This is an uncharacterized protein from Saccharomyces cerevisiae (strain ATCC 204508 / S288c) (Baker's yeast).